The sequence spans 183 residues: ATP synthase subunit delta (183 aa).

This sequence belongs to the ATPase delta chain family. In terms of assembly, F-type ATPases have 2 components, F(1) - the catalytic core - and F(0) - the membrane proton channel. F(1) has five subunits: alpha(3), beta(3), gamma(1), delta(1), epsilon(1). F(0) has three main subunits: a(1), b(2) and c(10-14). The alpha and beta chains form an alternating ring which encloses part of the gamma chain. F(1) is attached to F(0) by a central stalk formed by the gamma and epsilon chains, while a peripheral stalk is formed by the delta and b chains.

Its subcellular location is the cell inner membrane. F(1)F(0) ATP synthase produces ATP from ADP in the presence of a proton or sodium gradient. F-type ATPases consist of two structural domains, F(1) containing the extramembraneous catalytic core and F(0) containing the membrane proton channel, linked together by a central stalk and a peripheral stalk. During catalysis, ATP synthesis in the catalytic domain of F(1) is coupled via a rotary mechanism of the central stalk subunits to proton translocation. Functionally, this protein is part of the stalk that links CF(0) to CF(1). It either transmits conformational changes from CF(0) to CF(1) or is implicated in proton conduction. The protein is ATP synthase subunit delta of Ehrlichia canis (strain Jake).